A 378-amino-acid polypeptide reads, in one-letter code: Glycerate kinase (378 aa).

This sequence belongs to the glycerate kinase type-1 family.

The catalysed reaction is (R)-glycerate + ATP = (2R)-3-phosphoglycerate + ADP + H(+). This chain is Glycerate kinase (glxK), found in Haemophilus influenzae (strain ATCC 51907 / DSM 11121 / KW20 / Rd).